The primary structure comprises 608 residues: UvrABC system protein C (608 aa).

The GIY-YIG domain maps to 15–93 (HQPGVYRMYN…IKQYLPKYNV (79 aa)). A UVR domain is found at 203 to 238 (RQVIQSLVEQMEGASQALNFEKAATIRDQIQSMRRV).

Belongs to the UvrC family. Interacts with UvrB in an incision complex.

Its subcellular location is the cytoplasm. Its function is as follows. The UvrABC repair system catalyzes the recognition and processing of DNA lesions. UvrC both incises the 5' and 3' sides of the lesion. The N-terminal half is responsible for the 3' incision and the C-terminal half is responsible for the 5' incision. This Aliivibrio salmonicida (strain LFI1238) (Vibrio salmonicida (strain LFI1238)) protein is UvrABC system protein C.